The primary structure comprises 162 residues: Phosphopantetheine adenylyltransferase (162 aa).

A substrate-binding site is contributed by Thr14. ATP contacts are provided by residues 14–15 (TF) and His22. The substrate site is built by Lys46, Leu78, and Arg92. ATP contacts are provided by residues 93–95 (GLR), Glu103, and 128–134 (HSFISSS).

The protein belongs to the bacterial CoaD family. Homohexamer. It depends on Mg(2+) as a cofactor.

It localises to the cytoplasm. It catalyses the reaction (R)-4'-phosphopantetheine + ATP + H(+) = 3'-dephospho-CoA + diphosphate. It participates in cofactor biosynthesis; coenzyme A biosynthesis; CoA from (R)-pantothenate: step 4/5. Its function is as follows. Reversibly transfers an adenylyl group from ATP to 4'-phosphopantetheine, yielding dephospho-CoA (dPCoA) and pyrophosphate. The chain is Phosphopantetheine adenylyltransferase from Xylella fastidiosa (strain M23).